Here is a 481-residue protein sequence, read N- to C-terminus: 3-isopropylmalate dehydratase large subunit (481 aa).

[4Fe-4S] cluster-binding residues include Cys-357, Cys-417, and Cys-420. A compositionally biased stretch (polar residues) spans Ser-429–Asn-441. Residues Ser-429–Arg-451 form a disordered region.

Belongs to the aconitase/IPM isomerase family. LeuC type 1 subfamily. As to quaternary structure, heterodimer of LeuC and LeuD. It depends on [4Fe-4S] cluster as a cofactor.

It catalyses the reaction (2R,3S)-3-isopropylmalate = (2S)-2-isopropylmalate. The protein operates within amino-acid biosynthesis; L-leucine biosynthesis; L-leucine from 3-methyl-2-oxobutanoate: step 2/4. Catalyzes the isomerization between 2-isopropylmalate and 3-isopropylmalate, via the formation of 2-isopropylmaleate. This Mycobacterium sp. (strain KMS) protein is 3-isopropylmalate dehydratase large subunit.